Reading from the N-terminus, the 160-residue chain is Putative UPF0479 protein YNL339W-B (160 aa).

A run of 2 helical transmembrane segments spans residues 39-59 (IVFC…KVLQ) and 136-156 (VPMI…ISQH).

This sequence belongs to the UPF0479 family.

Its subcellular location is the membrane. This chain is Putative UPF0479 protein YNL339W-B, found in Saccharomyces cerevisiae (strain ATCC 204508 / S288c) (Baker's yeast).